The sequence spans 385 residues: Nuclear hormone receptor family member nhr-68 (385 aa).

The nuclear receptor DNA-binding region spans 4–79; the sequence is KEVCLVCQDF…VGMDKTSLQA (76 aa). 2 consecutive NR C4-type zinc fingers follow at residues 7 to 27 and 43 to 62; these read CLVCQDFSSGYHYGIPSCNGC and CQFDQNCPVDKSIRCACRFC. The segment at 81-110 is disordered; it reads RDPIGYTKRNKKTLRHPMNELSGDESNSCT. Positions 145–384 constitute an NR LBD domain; the sequence is PKRSLKQALC…SFAKELIFGD (240 aa). Residues 373–384 are AF-2; the sequence is FTSFAKELIFGD.

Belongs to the nuclear hormone receptor family.

It localises to the nucleus. Functionally, probable transcription factor that acts in a feed-forward loop with nhr-10 to activate genes, including itself, involved in the vitamin B12-independent breakdown of the short-chain fatty acid propionate. This pathway is triggered in response to a diet low in vitamin B12, when canonical vitamin B12-dependent propionate breakdown cannot function; the resulting accumulation of propionate is probably sensed by nhr-68 and/or nhr-10. In Caenorhabditis elegans, this protein is Nuclear hormone receptor family member nhr-68.